Here is an 87-residue protein sequence, read N- to C-terminus: UPF0213 protein SYNAS_10430 (87 aa).

One can recognise a GIY-YIG domain in the interval 2–78 (SKNYVYILEC…KKMSRAEKLQ (77 aa)).

This sequence belongs to the UPF0213 family.

The chain is UPF0213 protein SYNAS_10430 from Syntrophus aciditrophicus (strain SB).